Consider the following 187-residue polypeptide: Elongation factor P (187 aa).

Belongs to the elongation factor P family.

The protein localises to the cytoplasm. Its pathway is protein biosynthesis; polypeptide chain elongation. In terms of biological role, involved in peptide bond synthesis. Stimulates efficient translation and peptide-bond synthesis on native or reconstituted 70S ribosomes in vitro. Probably functions indirectly by altering the affinity of the ribosome for aminoacyl-tRNA, thus increasing their reactivity as acceptors for peptidyl transferase. This is Elongation factor P from Nocardioides sp. (strain ATCC BAA-499 / JS614).